A 99-amino-acid chain; its full sequence is Protein translation factor SUI1 homolog (99 aa).

It belongs to the SUI1 family.

The polypeptide is Protein translation factor SUI1 homolog (Pyrococcus horikoshii (strain ATCC 700860 / DSM 12428 / JCM 9974 / NBRC 100139 / OT-3)).